The chain runs to 243 residues: Cell division protein ZipA (243 aa).

Over 1 to 4 the chain is Periplasmic; sequence MSDM. A helical membrane pass occupies residues 5-25; the sequence is AMIRIGILIAGLLLVAAIFLF. Residues 26–243 lie on the Cytoplasmic side of the membrane; sequence GRPKKSPQGR…APPLTKSPRW (218 aa). Positions 30-89 are disordered; it reads KSPQGRRVDKDEGQPRERREPVISSEFGVEDDAAERAEGVEQSELNLEGQDASGGNEVGK. Over residues 35–50 the composition is skewed to basic and acidic residues; the sequence is RRVDKDEGQPRERREP.

Belongs to the ZipA family. Interacts with FtsZ via their C-terminal domains.

It is found in the cell inner membrane. Its function is as follows. Essential cell division protein that stabilizes the FtsZ protofilaments by cross-linking them and that serves as a cytoplasmic membrane anchor for the Z ring. Also required for the recruitment to the septal ring of downstream cell division proteins. The polypeptide is Cell division protein ZipA (Xanthomonas euvesicatoria pv. vesicatoria (strain 85-10) (Xanthomonas campestris pv. vesicatoria)).